We begin with the raw amino-acid sequence, 359 residues long: Cytohesin-interacting protein (359 aa).

The PDZ domain maps to 77-166 (LVTVEKQDNE…LLTIETLNGT (90 aa)). The segment at 166–188 (TMILKRTELEAKLQVLKQTLKQK) is interaction with CYTH1. The stretch at 166–188 (TMILKRTELEAKLQVLKQTLKQK) forms a coiled coil.

In terms of assembly, interacts with CYTH1 and SNX27. Expressed in lymph nodes, thymus, spleen, lung, peripheral blood leukocytes and bone marrow.

The protein localises to the cytoplasm. It localises to the early endosome. In terms of biological role, by its binding to cytohesin-1 (CYTH1), it modifies activation of ARFs by CYTH1 and its precise function may be to sequester CYTH1 in the cytoplasm. This Homo sapiens (Human) protein is Cytohesin-interacting protein (CYTIP).